Consider the following 305-residue polypeptide: Putative lipid kinase SAB0675c (305 aa).

Residues asparagine 3–tyrosine 139 enclose the DAGKc domain. Residues serine 44, glycine 74–glutamate 80, and threonine 101 contribute to the ATP site. Mg(2+) contacts are provided by serine 220, aspartate 223, and glutamate 225. The Proton acceptor role is filled by glutamate 281.

Belongs to the diacylglycerol/lipid kinase family. Requires Mg(2+) as cofactor.

Functionally, may catalyze the ATP-dependent phosphorylation of lipids other than diacylglycerol (DAG). This Staphylococcus aureus (strain bovine RF122 / ET3-1) protein is Putative lipid kinase SAB0675c.